We begin with the raw amino-acid sequence, 79 residues long: Conotoxin ArMSGL-0122 (79 aa).

The N-terminal stretch at 1–20 is a signal peptide; the sequence is MSRLGIMVLTLLLLVFIVTS. A propeptide spanning residues 21–44 is cleaved from the precursor; the sequence is HQDAGEKQATQRAAINFRWKRSLT. 3 cysteine pairs are disulfide-bonded: Cys-52–Cys-64, Cys-56–Cys-73, and Cys-63–Cys-77. Leu-78 carries the post-translational modification Leucine amide.

The protein belongs to the conotoxin O3 superfamily. Expressed by the venom duct.

The protein localises to the secreted. This is Conotoxin ArMSGL-0122 from Conus arenatus (Sand-dusted cone).